Consider the following 210-residue polypeptide: DNA-directed RNA polymerase III subunit rpc31 (210 aa).

The residue at position 103 (serine 103) is a Phosphoserine. The disordered stretch occupies residues 151–210 (KDESSEAAHPNIEEEPDEGLEEEDEDFGDDDDNDYGENYFDNGEGDDYDDYDGDEGAIYE). Composition is skewed to acidic residues over residues 163–185 (EEEPDEGLEEEDEDFGDDDDNDY) and 193–210 (GEGDDYDDYDGDEGAIYE).

Belongs to the eukaryotic RPC7 RNA polymerase subunit family. As to quaternary structure, component of the RNA polymerase III (Pol III) complex.

The protein resides in the cytoplasm. The protein localises to the nucleus. DNA-dependent RNA polymerase catalyzes the transcription of DNA into RNA using the four ribonucleoside triphosphates as substrates. Specific peripheric component of RNA polymerase III which synthesizes small RNAs, such as 5S rRNA and tRNAs. The chain is DNA-directed RNA polymerase III subunit rpc31 (rpc31) from Schizosaccharomyces pombe (strain 972 / ATCC 24843) (Fission yeast).